The chain runs to 107 residues: Frataxin (107 aa).

This sequence belongs to the frataxin family. As to quaternary structure, monomer.

Its subcellular location is the cytoplasm. In terms of biological role, promotes the assembly and repair of iron-sulfur clusters by delivering Fe(2+) to proteins involved in these pathways. The polypeptide is Frataxin (YFH1) (Trachipleistophora hominis (Microsporidian parasite)).